Here is a 503-residue protein sequence, read N- to C-terminus: SH2 domain-containing adapter protein B (503 aa).

2 disordered regions span residues 1-49 (MAKW…QACS) and 61-81 (CFSA…DLIR). S101 carries the phosphoserine modification. Over residues 147–157 (AAASSSSSSGS) the composition is skewed to low complexity. Residues 147–180 (AAASSSSSSGSPHLYRSSSERRPTTPAEVRYISP) form a disordered region. A Glycyl lysine isopeptide (Lys-Gly) (interchain with G-Cter in SUMO2) cross-link involves residue K186. 3 disordered regions span residues 225 to 262 (ETGA…SAGY), 292 to 333 (DTPY…YDQP), and 345 to 381 (AAQF…IKHG). Positions 244 to 256 (FDAKSDLKSKAGK) are enriched in basic and acidic residues. Phosphoserine is present on residues S301 and S311. Residues 301–311 (SVDSDSESTVS) are compositionally biased toward polar residues. Residues 313–328 (RLRESKLPQDDDRPAD) show a composition bias toward basic and acidic residues. S382 bears the Phosphoserine mark. Residues 404 to 498 (WYHGAISRSD…AEHLSLLYPV (95 aa)) enclose the SH2 domain.

Interacts with phosphorylated 'Tyr-720' of the ligand-activated receptor PDGFRA via its SH2 domain. Interacts with the ligand-activated receptors PDGFRB, FGFR1, KDR/VEGFR2, IL2RB and IL2RG. Interacts with EPS8 and V-SRC. Interacts with GRB2 and GRAP. Interacts with CD3Z. Interacts with tyrosine-phosphorylated LAT upon T-cell antigen receptor activation. Interacts with PLCG1. Interacts with ZAP70, LCP2/SLP-76, VAV1 and GRAP2. Interacts with JAK1 and JAK3. Interacts with PTK2/FAK1. Interacts with CRK/CrKII. Interacts with IRS2. Interacts with PTPN11. In terms of processing, phosphorylated upon PDGFRA, PDGFRB, TCR, IL2 receptor, FGFR1 or VEGFR2 activation. Expressed in heart, liver, brain and kidney (at protein level).

Its subcellular location is the cytoplasm. It is found in the cell membrane. Its function is as follows. Adapter protein which regulates several signal transduction cascades by linking activated receptors to downstream signaling components. May play a role in angiogenesis by regulating FGFR1, VEGFR2 and PDGFR signaling. May also play a role in T-cell antigen receptor/TCR signaling, interleukin-2 signaling, apoptosis and neuronal cells differentiation by mediating basic-FGF and NGF-induced signaling cascades. May also regulate IRS1 and IRS2 signaling in insulin-producing cells. The protein is SH2 domain-containing adapter protein B (Shb) of Mus musculus (Mouse).